The chain runs to 193 residues: Ribosomal RNA large subunit methyltransferase E (193 aa).

Residues G51, W53, D69, D85, and D108 each contribute to the S-adenosyl-L-methionine site. K148 (proton acceptor) is an active-site residue.

It belongs to the class I-like SAM-binding methyltransferase superfamily. RNA methyltransferase RlmE family.

The protein localises to the cytoplasm. It carries out the reaction uridine(2552) in 23S rRNA + S-adenosyl-L-methionine = 2'-O-methyluridine(2552) in 23S rRNA + S-adenosyl-L-homocysteine + H(+). Its function is as follows. Specifically methylates the uridine in position 2552 of 23S rRNA at the 2'-O position of the ribose in the fully assembled 50S ribosomal subunit. This Methanoregula boonei (strain DSM 21154 / JCM 14090 / 6A8) protein is Ribosomal RNA large subunit methyltransferase E.